Consider the following 330-residue polypeptide: ADP-L-glycero-D-manno-heptose-6-epimerase (330 aa).

Residues 11 to 12, 32 to 33, Lys39, Lys54, 75 to 79, and Asn92 each bind NADP(+); these read FI, DN, and EGACS. The active-site Proton acceptor is Tyr139. Residue Lys143 coordinates NADP(+). Asn168 serves as a coordination point for substrate. Residues Val169 and Lys177 each contribute to the NADP(+) site. The active-site Proton acceptor is Lys177. Substrate is bound by residues Arg179, His186, 200 to 203, Arg213, and Tyr292; that span reads FGEY.

The protein belongs to the NAD(P)-dependent epimerase/dehydratase family. HldD subfamily. As to quaternary structure, homopentamer. The cofactor is NADP(+).

The enzyme catalyses ADP-D-glycero-beta-D-manno-heptose = ADP-L-glycero-beta-D-manno-heptose. It functions in the pathway nucleotide-sugar biosynthesis; ADP-L-glycero-beta-D-manno-heptose biosynthesis; ADP-L-glycero-beta-D-manno-heptose from D-glycero-beta-D-manno-heptose 7-phosphate: step 4/4. Its function is as follows. Catalyzes the interconversion between ADP-D-glycero-beta-D-manno-heptose and ADP-L-glycero-beta-D-manno-heptose via an epimerization at carbon 6 of the heptose. The protein is ADP-L-glycero-D-manno-heptose-6-epimerase of Burkholderia mallei (strain NCTC 10247).